Reading from the N-terminus, the 1016-residue chain is Rho family-interacting cell polarization regulator 2 (1016 aa).

A phosphoserine mark is found at serine 21 and serine 37. The disordered stretch occupies residues 44–73 (AVKKPQAKLKKMHNLGHKNSSPPKEPQPKR). The span at 48 to 59 (PQAKLKKMHNLG) shows a compositional bias: basic residues. The tract at residues 55-113 (MHNLGHKNSSPPKEPQPKRVEEVYRALKNGLDEYLEVHQTELDKLTTQLKDMRRNSRLG) is involved in cell filopodia formation. The stretch at 85 to 112 (LDEYLEVHQTELDKLTTQLKDMRRNSRL) forms a coiled coil. Phosphoserine is present on serine 341. Positions 414–428 (TSTELPPGSQSSQNE) are enriched in polar residues. The interval 414-469 (TSTELPPGSQSSQNEGLKDSSSASCSSSSREGSEPRPHPEGETQGLGKPEGCPVAT) is disordered. Positions 433–442 (SSSASCSSSS) are enriched in low complexity. Positions 444 to 454 (EGSEPRPHPEG) are enriched in basic and acidic residues. Phosphoserine is present on residues serine 520 and serine 532. The segment at 636–656 (DSVFSDTETEKNSYRSVHPEA) is disordered. The span at 643–656 (ETEKNSYRSVHPEA) shows a compositional bias: basic and acidic residues.

This sequence belongs to the RIPOR family. Homooligomer; homooligomerization is regulated by RHOC and leads to the formation of concatemers through the association of N- and C-termini. Interacts (phosphorylated form) with 14-3-3 proteins; these interactions occur during myogenic cell differentiation and also induces T cell proliferation arrest. Interacts (phosphorylated form) with HDAC6; this interaction occurs during early myogenic differentiation, prevents HDAC6 to deacetylate tubulin and also induces T cell proliferation arrest. Interacts with DYSF; this interaction occurs during early myogenic differentiation. Interacts with MYOF. Interacts (via active GTP- or inactive GDP-bound forms) with RHOA; this interaction is direct, blocks the loading of GTP to RHOA and decreases upon chemokine CCL19 stimulation in primary T lymphocytes. Interacts with RHOC. Interacts (via phosphorylated form) with YWHAB; this interaction occurs in a chemokine-dependent manner and does not compete for binding of RIPOR2 with RHOA nor blocks inhibition of RIPOR2-mediated RHOA activity. Interacts with YWHAE. Interacts with YWHAQ. Post-translationally, phosphorylated. Chemokine-induced phosphorylation in neutrophils occurs in a PKC- and AKT-dependent manner, resulting in RIPOR2 interaction with YWHAB and stabilization. Phosphorylated by PKCA, AKT1 and MAPKAPK1A; in vitro.

It is found in the cytoplasm. Its subcellular location is the cytoskeleton. The protein resides in the cell projection. The protein localises to the filopodium. It localises to the apical cell membrane. It is found in the stereocilium. Its subcellular location is the stereocilium membrane. Acts as an inhibitor of the small GTPase RHOA and plays several roles in the regulation of myoblast and hair cell differentiation, lymphocyte T proliferation and neutrophil polarization. Plays a role in fetal mononuclear myoblast differentiation by promoting filopodia and myotube formation. Maintains naive T lymphocytes in a quiescent state and prevents chemokine-induced T lymphocyte responses, such as cell adhesion, polarization and migration. Involved also in the regulation of neutrophil polarization, chemotaxis and adhesion. Required for normal development of inner and outer hair cell stereocilia within the cochlea of the inner ear. Plays a role for maintaining the structural organization of the basal domain of stereocilia. Involved in mechanosensory hair cell function. Required for normal hearing. The protein is Rho family-interacting cell polarization regulator 2 of Bos taurus (Bovine).